We begin with the raw amino-acid sequence, 238 residues long: Ribosomal RNA small subunit methyltransferase G (238 aa).

S-adenosyl-L-methionine contacts are provided by residues Gly77, Phe82, 128–129 (AE), and Arg147. Positions 216-238 (RKERSTPKKYPRKPGTPNKQPLS) are disordered.

It belongs to the methyltransferase superfamily. RNA methyltransferase RsmG family.

The protein localises to the cytoplasm. In terms of biological role, specifically methylates the N7 position of guanine in position 535 of 16S rRNA. This chain is Ribosomal RNA small subunit methyltransferase G, found in Halalkalibacterium halodurans (strain ATCC BAA-125 / DSM 18197 / FERM 7344 / JCM 9153 / C-125) (Bacillus halodurans).